The sequence spans 348 residues: Protein lifeguard 1 (348 aa).

A disordered region spans residues 1 to 118 (MSHEKSFLVS…GNYQEEGPPS (118 aa)). The span at 14 to 41 (YPPPNPGYPVGPQAPMPPYVQPPYPGAP) shows a compositional bias: pro residues. Residues 42–57 (YPQAAFQPSPYGQPGY) show a composition bias toward low complexity. A compositionally biased stretch (pro residues) spans 82–101 (GPYPQSPFPPNPYGQPPPFQ). Transmembrane regions (helical) follow at residues 142-162 (VFLVLTLQLSVTLSTVAIFTF), 174-194 (VWTYYVSYAIFFISLIVLSCC), 205-225 (LVALSILTISLSYMVGMIASF), 230-250 (AVIMAVGITTAVCFTVVIFSM), 260-280 (MGVLLVSVVVLFIFAILCIFI), 284-304 (ILEIVYASLGALLFTCFLAVD), and 323-343 (FAALNLYTDIINIFLYILTII).

It belongs to the BI1 family. LFG subfamily.

It localises to the membrane. Its function is as follows. Potential apoptotic regulator. This chain is Protein lifeguard 1 (Grina), found in Rattus norvegicus (Rat).